A 549-amino-acid chain; its full sequence is Glucose-6-phosphate isomerase (549 aa).

Glu353 (proton donor) is an active-site residue. Active-site residues include His384 and Lys513.

It belongs to the GPI family.

It is found in the cytoplasm. It catalyses the reaction alpha-D-glucose 6-phosphate = beta-D-fructose 6-phosphate. Its pathway is carbohydrate biosynthesis; gluconeogenesis. The protein operates within carbohydrate degradation; glycolysis; D-glyceraldehyde 3-phosphate and glycerone phosphate from D-glucose: step 2/4. Functionally, catalyzes the reversible isomerization of glucose-6-phosphate to fructose-6-phosphate. The polypeptide is Glucose-6-phosphate isomerase (Brucella melitensis biotype 2 (strain ATCC 23457)).